The sequence spans 313 residues: Homoserine O-succinyltransferase (313 aa).

Catalysis depends on cysteine 142, which acts as the Acyl-thioester intermediate. Substrate contacts are provided by lysine 163 and serine 192. Histidine 235 (proton acceptor) is an active-site residue. Glutamate 237 is an active-site residue. Arginine 249 provides a ligand contact to substrate.

This sequence belongs to the MetA family.

The protein resides in the cytoplasm. It catalyses the reaction L-homoserine + succinyl-CoA = O-succinyl-L-homoserine + CoA. Its pathway is amino-acid biosynthesis; L-methionine biosynthesis via de novo pathway; O-succinyl-L-homoserine from L-homoserine: step 1/1. In terms of biological role, transfers a succinyl group from succinyl-CoA to L-homoserine, forming succinyl-L-homoserine. This chain is Homoserine O-succinyltransferase, found in Shewanella baltica (strain OS223).